The chain runs to 216 residues: Elongation factor Ts (216 aa).

Residues 81 to 84 (TDFV) are involved in Mg(2+) ion dislocation from EF-Tu.

The protein belongs to the EF-Ts family.

It localises to the cytoplasm. Its function is as follows. Associates with the EF-Tu.GDP complex and induces the exchange of GDP to GTP. It remains bound to the aminoacyl-tRNA.EF-Tu.GTP complex up to the GTP hydrolysis stage on the ribosome. This Geobacter sp. (strain M21) protein is Elongation factor Ts.